A 386-amino-acid polypeptide reads, in one-letter code: Putative F-box/kelch-repeat protein At3g17280 (386 aa).

Positions 1-48 constitute an F-box domain; it reads MTTISDLPYDLLPEILSRLPTKSIPKLKTTCKKWYALFKDPKFVEKKL. Kelch repeat units follow at residues 155 to 203 and 340 to 386; these read SYKI…LKES and RIYI…IVEV.

In Arabidopsis thaliana (Mouse-ear cress), this protein is Putative F-box/kelch-repeat protein At3g17280.